Here is a 508-residue protein sequence, read N- to C-terminus: Photosystem II CP47 reaction center protein (508 aa).

6 helical membrane-spanning segments follow: residues 21 to 36 (SVHIMHTALVAGWAGS), 101 to 115 (IVLSGLCFLAAIWHW), 140 to 156 (GIHLFLSGVACFGFGAF), 203 to 218 (IAAGTLGILAGLFHLS), 237 to 252 (VLSSSIAAVFFAAFVV), and 457 to 472 (SFALLFFFGHIWHGAR).

The protein belongs to the PsbB/PsbC family. PsbB subfamily. PSII is composed of 1 copy each of membrane proteins PsbA, PsbB, PsbC, PsbD, PsbE, PsbF, PsbH, PsbI, PsbJ, PsbK, PsbL, PsbM, PsbT, PsbX, PsbY, PsbZ, Psb30/Ycf12, at least 3 peripheral proteins of the oxygen-evolving complex and a large number of cofactors. It forms dimeric complexes. The cofactor is Binds multiple chlorophylls. PSII binds additional chlorophylls, carotenoids and specific lipids..

It is found in the plastid. Its subcellular location is the chloroplast thylakoid membrane. Functionally, one of the components of the core complex of photosystem II (PSII). It binds chlorophyll and helps catalyze the primary light-induced photochemical processes of PSII. PSII is a light-driven water:plastoquinone oxidoreductase, using light energy to abstract electrons from H(2)O, generating O(2) and a proton gradient subsequently used for ATP formation. The chain is Photosystem II CP47 reaction center protein from Pelargonium hortorum (Common geranium).